The sequence spans 199 residues: CASP-like protein 1D2 (199 aa).

Positions 1-27 (MASTENPDPETGKSEPIPASATPPPSS) are disordered. Alanine 2 carries the post-translational modification N-acetylalanine. Residues 2–36 (ASTENPDPETGKSEPIPASATPPPSSAASFLDCRK) are Cytoplasmic-facing. The helical transmembrane segment at 37–57 (IDIITRVLLFSATLTALIVMV) threads the bilayer. At 58 to 85 (TSDQTEMTQLPGVSSPAPVSAEFNDSPA) the chain is on the extracellular side. The helical transmembrane segment at 86–106 (FIYFVVALVVASFYALISTLV) threads the bilayer. The Cytoplasmic segment spans residues 107–129 (SISLLLKPEFTAQFSIYLASLDM). The helical transmembrane segment at 130-150 (VMLGILASATGTAGGVAYIAL) threads the bilayer. Residues 151 to 171 (KGNEEVGWNKICNVYDKFCRY) lie on the Extracellular side of the membrane. The chain crosses the membrane as a helical span at residues 172–192 (IATSLALSLFASLLLLVLSIW). Residues 193–199 (SALSKRT) are Cytoplasmic-facing.

It belongs to the Casparian strip membrane proteins (CASP) family. As to quaternary structure, homodimer and heterodimers. In terms of tissue distribution, expressed in the root endodermis and flowers.

It is found in the cell membrane. The protein is CASP-like protein 1D2 of Arabidopsis thaliana (Mouse-ear cress).